The following is a 267-amino-acid chain: Small ribosomal subunit protein uS2 (267 aa).

The disordered stretch occupies residues 225 to 267; the sequence is LREQELEGEEQEEAAPATEEEKKELIEEAVAEGEAEETEEEEK. A compositionally biased stretch (acidic residues) spans 251–267; that stretch reads EEAVAEGEAEETEEEEK.

Belongs to the universal ribosomal protein uS2 family.

This is Small ribosomal subunit protein uS2 from Nitratiruptor sp. (strain SB155-2).